Consider the following 563-residue polypeptide: Probable ganciclovir kinase (563 aa).

The span at 1–16 (MDNGVETPQGQKTQPI) shows a compositional bias: polar residues. Positions 1–33 (MDNGVETPQGQKTQPINLPPDRKRLRKHDGLGK) are disordered. ATP-binding positions include 202–210 (LGVGAYGKV) and Lys219. Asp314 serves as the catalytic Proton acceptor.

The protein belongs to the protein kinase superfamily. Tyr protein kinase family. HCMV ganciclovir subfamily.

Functionally, phosphorylates the antiviral nucleoside analog ganciclovir. The protein is Probable ganciclovir kinase (U69) of Human herpesvirus 6B (strain Z29) (HHV-6 variant B).